Reading from the N-terminus, the 183-residue chain is Capsid protein (183 aa).

The interval 143 to 183 is disordered; the sequence is LPETTVIRRRGRSPRRRTPSPRRRRSQSPRRRRSQSREPQC. The span at 149-176 shows a compositional bias: basic residues; it reads IRRRGRSPRRRTPSPRRRRSQSPRRRRS. Residues Ser155, Ser162, and Ser170 each carry the phosphoserine; by host modification. One copy of the 1; half-length repeat lies at 155 to 161; it reads SPRRRTP. Residues 155–177 are 3 X 8 AA repeats of S-P-R-R-R-[PR]-S-Q; that stretch reads SPRRRTPSPRRRRSQSPRRRRSQ. Residues 158-175 carry the Bipartite nuclear localization signal motif; the sequence is RRTPSPRRRRSQSPRRRR. Repeat copies occupy residues 162–169 and 170–177. The segment at 177–183 is RNA binding; that stretch reads QSREPQC.

Belongs to the orthohepadnavirus core antigen family. Homodimerizes, then multimerizes. Interacts with cytosol exposed regions of viral L glycoprotein present in the reticulum-to-Golgi compartment. Interacts with human FLNB. Phosphorylated form interacts with host importin alpha; this interaction depends on the exposure of the NLS, which itself depends upon genome maturation and/or phosphorylation of the capsid protein. Interacts with host NUP153. Phosphorylated by host SRPK1, SRPK2, and maybe protein kinase C or GAPDH. Phosphorylation is critical for pregenomic RNA packaging. Protein kinase C phosphorylation is stimulated by HBx protein and may play a role in transport of the viral genome to the nucleus at the late step during the viral replication cycle.

Its subcellular location is the virion. The protein resides in the host cytoplasm. Functionally, self assembles to form an icosahedral capsid. Most capsids appear to be large particles with an icosahedral symmetry of T=4 and consist of 240 copies of capsid protein, though a fraction forms smaller T=3 particles consisting of 180 capsid proteins. Entering capsids are transported along microtubules to the nucleus. Phosphorylation of the capsid is thought to induce exposure of nuclear localization signal in the C-terminal portion of the capsid protein that allows binding to the nuclear pore complex via the importin (karyopherin-) alpha and beta. Capsids are imported in intact form through the nuclear pore into the nuclear basket, where it probably binds NUP153. Only capsids that contain the mature viral genome can release the viral DNA and capsid protein into the nucleoplasm. Immature capsids get stuck in the basket. Capsids encapsulate the pre-genomic RNA and the P protein. Pre-genomic RNA is reverse-transcribed into DNA while the capsid is still in the cytoplasm. The capsid can then either be directed to the nucleus, providing more genomes for transcription, or bud through the endoplasmic reticulum to provide new virions. The protein is Capsid protein of Hepatitis B virus genotype B1 (isolate Japan/Ry30/2002) (HBV-B).